The following is a 178-amino-acid chain: Large ribosomal subunit protein uL6 (178 aa).

This sequence belongs to the universal ribosomal protein uL6 family. As to quaternary structure, part of the 50S ribosomal subunit.

This protein binds to the 23S rRNA, and is important in its secondary structure. It is located near the subunit interface in the base of the L7/L12 stalk, and near the tRNA binding site of the peptidyltransferase center. The chain is Large ribosomal subunit protein uL6 from Halobacterium salinarum (strain ATCC 700922 / JCM 11081 / NRC-1) (Halobacterium halobium).